Reading from the N-terminus, the 145-residue chain is MRGLLQRVRGARVEVAGEVVGAIDQGLLVLVAVEPEDSREQADKLLHKLLNYRVFSDEQGKMNLSLKDVGGGLLLVSQFTLAADTRNGMRPSFSTAAPPALGAELFDYLLQQAKAQYADVASGRFGADMQVHLVNDGPVTFMLQI.

The Gly-cisPro motif, important for rejection of L-amino acids signature appears at 137–138; sequence GP.

This sequence belongs to the DTD family. In terms of assembly, homodimer.

Its subcellular location is the cytoplasm. It catalyses the reaction glycyl-tRNA(Ala) + H2O = tRNA(Ala) + glycine + H(+). It carries out the reaction a D-aminoacyl-tRNA + H2O = a tRNA + a D-alpha-amino acid + H(+). An aminoacyl-tRNA editing enzyme that deacylates mischarged D-aminoacyl-tRNAs. Also deacylates mischarged glycyl-tRNA(Ala), protecting cells against glycine mischarging by AlaRS. Acts via tRNA-based rather than protein-based catalysis; rejects L-amino acids rather than detecting D-amino acids in the active site. By recycling D-aminoacyl-tRNA to D-amino acids and free tRNA molecules, this enzyme counteracts the toxicity associated with the formation of D-aminoacyl-tRNA entities in vivo and helps enforce protein L-homochirality. The protein is D-aminoacyl-tRNA deacylase of Pseudomonas putida (strain ATCC 47054 / DSM 6125 / CFBP 8728 / NCIMB 11950 / KT2440).